The primary structure comprises 39 residues: Photosystem I reaction center subunit IX (39 aa).

Residues 7-27 (FLTTAPVAFILFSSFVFALFI) form a helical membrane-spanning segment.

It belongs to the PsaJ family.

The protein resides in the cellular thylakoid membrane. Functionally, may help in the organization of the PsaE and PsaF subunits. In Synechococcus sp. (strain JA-3-3Ab) (Cyanobacteria bacterium Yellowstone A-Prime), this protein is Photosystem I reaction center subunit IX.